The following is a 459-amino-acid chain: Methionine aminopeptidase 2-2 (459 aa).

The segment covering 1–12 (MGSKSPEDHRQG) has biased composition (basic and acidic residues). The interval 1–87 (MGSKSPEDHR…KKLSVVQQTS (87 aa)) is disordered. The segment covering 43-54 (GQDEDGDDDDDE) has biased composition (acidic residues). The span at 55-66 (KTGIDLKTNDGA) shows a compositional bias: basic and acidic residues. Positions 67 to 79 (KKKRKRNKKKSKK) are enriched in basic residues. H210 serves as a coordination point for substrate. 3 residues coordinate a divalent metal cation: D231, D242, and H311. H319 contributes to the substrate binding site. Residues E344 and E440 each coordinate a divalent metal cation.

Belongs to the peptidase M24A family. Methionine aminopeptidase eukaryotic type 2 subfamily. It depends on Co(2+) as a cofactor. The cofactor is Zn(2+). Mn(2+) is required as a cofactor. Fe(2+) serves as cofactor.

It localises to the cytoplasm. The enzyme catalyses Release of N-terminal amino acids, preferentially methionine, from peptides and arylamides.. Cotranslationally removes the N-terminal methionine from nascent proteins. The N-terminal methionine is often cleaved when the second residue in the primary sequence is small and uncharged (Met-Ala-, Cys, Gly, Pro, Ser, Thr, or Val). The chain is Methionine aminopeptidase 2-2 from Pyrenophora teres f. teres (strain 0-1) (Barley net blotch fungus).